A 490-amino-acid polypeptide reads, in one-letter code: Cytochrome P450 71A19 (490 aa).

Residues 3–23 (IILVTLCLTTLLALLLLKSIL) traverse the membrane as a helical segment. Position 433 (Cys433) interacts with heme.

It belongs to the cytochrome P450 family. It depends on heme as a cofactor.

Its subcellular location is the membrane. The sequence is that of Cytochrome P450 71A19 (CYP71A19) from Arabidopsis thaliana (Mouse-ear cress).